Here is a 504-residue protein sequence, read N- to C-terminus: Maturase K (504 aa).

Belongs to the intron maturase 2 family. MatK subfamily.

The protein localises to the plastid. It localises to the chloroplast. Functionally, usually encoded in the trnK tRNA gene intron. Probably assists in splicing its own and other chloroplast group II introns. This chain is Maturase K, found in Nepenthes alata (Winged pitcher plant).